Here is a 333-residue protein sequence, read N- to C-terminus: uncharacterized protein (333 aa).

The protein belongs to the polysaccharide synthase family.

This is an uncharacterized protein from Methanocaldococcus jannaschii (strain ATCC 43067 / DSM 2661 / JAL-1 / JCM 10045 / NBRC 100440) (Methanococcus jannaschii).